Here is a 362-residue protein sequence, read N- to C-terminus: Chorismate synthase (362 aa).

Arg47 serves as a coordination point for NADP(+). FMN is bound by residues 124 to 126 (RAS), Gly286, 301 to 305 (KPTAT), and Arg327.

It belongs to the chorismate synthase family. Homotetramer. It depends on FMNH2 as a cofactor.

It catalyses the reaction 5-O-(1-carboxyvinyl)-3-phosphoshikimate = chorismate + phosphate. It functions in the pathway metabolic intermediate biosynthesis; chorismate biosynthesis; chorismate from D-erythrose 4-phosphate and phosphoenolpyruvate: step 7/7. Functionally, catalyzes the anti-1,4-elimination of the C-3 phosphate and the C-6 proR hydrogen from 5-enolpyruvylshikimate-3-phosphate (EPSP) to yield chorismate, which is the branch point compound that serves as the starting substrate for the three terminal pathways of aromatic amino acid biosynthesis. This reaction introduces a second double bond into the aromatic ring system. The protein is Chorismate synthase of Prochlorococcus marinus (strain MIT 9303).